The sequence spans 390 residues: Heparan sulfate glucosamine 3-O-sulfotransferase 3B1 (390 aa).

Positions 1–25 are disordered; the sequence is MGQRLSGGRSCLDVPGRLLPQPPPP. Topologically, residues 1 to 32 are cytoplasmic; the sequence is MGQRLSGGRSCLDVPGRLLPQPPPPPPPVRRK. A helical; Signal-anchor for type II membrane protein transmembrane segment spans residues 33 to 53; sequence LALLFAMLCVWLYMFLYSCAG. Over 54–390 the chain is Lumenal; it reads SCAAAPGLLL…QMTGHDFGWD (337 aa). Residues 74-133 are disordered; that stretch reads PPALATAPDGTPPRLPFRAPPATPLASGKEMAEGAASPEEQSPEVPDSPSPISSFFSGSG. Over residues 83-96 the composition is skewed to pro residues; it reads GTPPRLPFRAPPAT. Residues 123-133 are compositionally biased toward low complexity; it reads SPISSFFSGSG. 147 to 151 provides a ligand contact to 3'-phosphoadenylyl sulfate; sequence KGGTR. Residues 169 to 175 and 200 to 203 contribute to the substrate site; these read EPHFFDR and KTPS. 2 residues coordinate 3'-phosphoadenylyl sulfate: R228 and S236. N-linked (GlcNAc...) asparagine glycosylation is present at N258. A substrate-binding site is contributed by 268 to 269; that stretch reads WS. N-linked (GlcNAc...) asparagine glycosylation occurs at N329. A disulfide bridge connects residues C336 and C348. Residue 353–357 participates in 3'-phosphoadenylyl sulfate binding; the sequence is KGRTH.

This sequence belongs to the sulfotransferase 1 family. Ubiquitous. Most abundant in liver and placenta, followed by heart and kidney.

It localises to the golgi apparatus membrane. The enzyme catalyses alpha-D-glucosaminyl-[heparan sulfate](n) + 3'-phosphoadenylyl sulfate = 3-sulfo-alpha-D-glucosaminyl-[heparan sulfate](n) + adenosine 3',5'-bisphosphate + H(+). Sulfotransferase that utilizes 3'-phospho-5'-adenylyl sulfate (PAPS) to catalyze the transfer of a sulfo group to an N-unsubstituted glucosamine linked to a 2-O-sulfo iduronic acid unit on heparan sulfate. Catalyzes the O-sulfation of glucosamine in IdoUA2S-GlcNS and also in IdoUA2S-GlcNH2. The substrate-specific O-sulfation generates an enzyme-modified heparan sulfate which acts as a binding receptor to Herpes simplex virus-1 (HSV-1) and permits its entry. Unlike HS3ST1/3-OST-1, does not convert non-anticoagulant heparan sulfate to anticoagulant heparan sulfate. This is Heparan sulfate glucosamine 3-O-sulfotransferase 3B1 (HS3ST3B1) from Homo sapiens (Human).